We begin with the raw amino-acid sequence, 92 residues long: Conotoxin Mr15.3 (92 aa).

Residues 1–20 form the signal peptide; that stretch reads MSTLKMMLLILLLLLPMATF. Residues 21–53 constitute a propeptide that is removed on maturation; sequence DSDGQAIPGGGIPSAVNSRVRGDEKSGRSLEKR.

This sequence belongs to the conotoxin N superfamily. In terms of processing, contains 4 disulfide bonds. In terms of tissue distribution, expressed by the venom duct.

It localises to the secreted. The chain is Conotoxin Mr15.3 from Conus marmoreus (Marble cone).